The chain runs to 500 residues: NAD(P)H-quinone oxidoreductase chain 4, chloroplastic (500 aa).

A run of 14 helical transmembrane segments spans residues 4 to 24 (FPWL…LFFL), 35 to 55 (YTLC…CYHF), 87 to 107 (FGPI…AWPV), 134 to 154 (LLLF…LLSM), 167 to 187 (FILY…GIGL), 208 to 228 (ALEI…SPII), 242 to 262 (HYST…YGLV), 272 to 292 (AHSI…VYAA), 305 to 325 (IAYS…SITD), 330 to 350 (GALL…FLAG), 364 to 384 (MGGM…LSMA), 386 to 406 (LALP…GIIT), 416 to 436 (ILIT…SLSM), and 462 to 482 (LFVS…PDFL).

Belongs to the complex I subunit 4 family.

It is found in the plastid. The protein localises to the chloroplast thylakoid membrane. The catalysed reaction is a plastoquinone + NADH + (n+1) H(+)(in) = a plastoquinol + NAD(+) + n H(+)(out). It catalyses the reaction a plastoquinone + NADPH + (n+1) H(+)(in) = a plastoquinol + NADP(+) + n H(+)(out). This is NAD(P)H-quinone oxidoreductase chain 4, chloroplastic from Pelargonium hortorum (Common geranium).